We begin with the raw amino-acid sequence, 361 residues long: Phosphoserine aminotransferase (361 aa).

An L-glutamate-binding site is contributed by R43. Pyridoxal 5'-phosphate-binding positions include 77-78 (AS), W103, T153, D173, and Q196. K197 is modified (N6-(pyridoxal phosphate)lysine). 238-239 (NT) contacts pyridoxal 5'-phosphate.

It belongs to the class-V pyridoxal-phosphate-dependent aminotransferase family. SerC subfamily. In terms of assembly, homodimer. Requires pyridoxal 5'-phosphate as cofactor.

It localises to the cytoplasm. The enzyme catalyses O-phospho-L-serine + 2-oxoglutarate = 3-phosphooxypyruvate + L-glutamate. It catalyses the reaction 4-(phosphooxy)-L-threonine + 2-oxoglutarate = (R)-3-hydroxy-2-oxo-4-phosphooxybutanoate + L-glutamate. It participates in amino-acid biosynthesis; L-serine biosynthesis; L-serine from 3-phospho-D-glycerate: step 2/3. It functions in the pathway cofactor biosynthesis; pyridoxine 5'-phosphate biosynthesis; pyridoxine 5'-phosphate from D-erythrose 4-phosphate: step 3/5. Its function is as follows. Catalyzes the reversible conversion of 3-phosphohydroxypyruvate to phosphoserine and of 3-hydroxy-2-oxo-4-phosphonooxybutanoate to phosphohydroxythreonine. This Pseudomonas aeruginosa (strain LESB58) protein is Phosphoserine aminotransferase.